The sequence spans 453 residues: Alpha-galacturonidase (453 aa).

Position 11 to 72 (11 to 72 (IKIAYIGGGS…SQWEYKSVDS (62 aa))) interacts with NAD(+). Asn-151 provides a ligand contact to substrate. Position 173 (Cys-173) interacts with Mn(2+). The Proton donor role is filled by His-174. His-209 contacts Mn(2+).

This sequence belongs to the glycosyl hydrolase 4 family. In terms of assembly, homotetramer. NAD(+) is required as a cofactor. Mn(2+) serves as cofactor.

The enzyme catalyses [(1-&gt;4)-alpha-D-galacturonosyl](n) + H2O = alpha-D-galacturonate + [(1-&gt;4)-alpha-D-galacturonosyl](n-1). In terms of biological role, alpha-galacturonidase able to catalyze the hydrolysis of the chromogenic substrate p-nitrophenyl-alpha-D-galacturonic acid (pNPalphaGalUA). It is probable that alpha-1,4-di-galacturonate (GalUA(2)) is the naturally occurring substrate. The protein is Alpha-galacturonidase of Thermoanaerobacter italicus (strain DSM 9252 / Ab9).